A 154-amino-acid polypeptide reads, in one-letter code: Ecotin-like protein 2 (154 aa).

Belongs to the protease inhibitor I11 (ecotin) family.

This is Ecotin-like protein 2 from Trypanosoma brucei brucei (strain 927/4 GUTat10.1).